We begin with the raw amino-acid sequence, 589 residues long: MFQEEIAKQLSVLTEIEANKILECIESTKNKDMADFAVPIPKLNKFKKLVGKPDQLAIDFASKIQLNDCIQGASATGNYLNFKVNRLLQVQEILKEVINQKEKYGMTEQGKGKKVIVEFSSPNIAKPFHAGHLRSTIIGNFMVNLFNELAYETVSMNYLGDWGKQYGLLAVGFEKYGSEEELLADPIKHLYNVYVQINGEAEKEEEAKKKYAEEIAAGVEPTAPLQTTPTIHDTARAYFKRMEDGDAEALAIWKRFRDLSIVKYKDIYNRLNVKFDIYAGESLVTEGMTIEFKKLQDKNLLEDSQGAKVIDLSKPNKLGKVLVQKTDGTTLYITRDIAAAVDRKNNIGFDKMYYVVASQQDFHFRQLFDILGKMDYQWQKDLTHINYGMVKGMSTRKGTVVFLEDILNKTQKKMLKIMKQNEQKFAEIEDPEKVADIVGLSAVVIQDFNAKRNKDYDFNWDRMLKSDGDTGPYLQYAHARLCSLERKSGFEFNPNANLSLLSEPEAFNLAITIGRYPEIIQLTHNQLEPSTLVGYLFELAHAVSSAHQVLWIKDREKDVAEARFVLYWAAKVILGSGLRILGLVPLERM.

L-arginine is bound by residues Ser-121–Asn-123, His-132, Tyr-332, Asp-336, and Gln-360. The 'HIGH' region signature appears at Ser-121–His-132. The tract at residues Asp-469–Ser-483 is interaction with tRNA.

It belongs to the class-I aminoacyl-tRNA synthetase family.

The protein resides in the cytoplasm. It is found in the cytosol. The catalysed reaction is tRNA(Arg) + L-arginine + ATP = L-arginyl-tRNA(Arg) + AMP + diphosphate. In terms of biological role, forms part of a macromolecular complex that catalyzes the attachment of specific amino acids to cognate tRNAs during protein synthesis. The chain is Probable arginine--tRNA ligase, cytoplasmic (argS1) from Dictyostelium discoideum (Social amoeba).